Reading from the N-terminus, the 747-residue chain is E3 UFM1-protein ligase 1 homolog (747 aa).

Residues 403-468 (EKKKQCGSKA…GTVQVNSEEL (66 aa)) form a disordered region. The segment covering 429 to 438 (GGKGGKKGGK) has biased composition (basic residues). Positions 439-449 (GGKNGGGGGKG) are enriched in gly residues. Over residues 450-465 (ATSSVPTGSGTVQVNS) the composition is skewed to polar residues.

It belongs to the UFL1 family.

In terms of biological role, E3 UFM1-protein ligase that mediates ufmylation of target proteins. The chain is E3 UFM1-protein ligase 1 homolog (ufl-1) from Caenorhabditis briggsae.